A 625-amino-acid polypeptide reads, in one-letter code: Phosphomethylpyrimidine synthase (625 aa).

Substrate-binding positions include Asn230, Met259, Tyr288, His324, 344–346 (SRG), 385–388 (DGLR), and Glu424. His428 lines the Zn(2+) pocket. Residue Tyr451 coordinates substrate. A Zn(2+)-binding site is contributed by His492. 3 residues coordinate [4Fe-4S] cluster: Cys572, Cys575, and Cys580.

Belongs to the ThiC family. As to quaternary structure, homodimer. The cofactor is [4Fe-4S] cluster.

The enzyme catalyses 5-amino-1-(5-phospho-beta-D-ribosyl)imidazole + S-adenosyl-L-methionine = 4-amino-2-methyl-5-(phosphooxymethyl)pyrimidine + CO + 5'-deoxyadenosine + formate + L-methionine + 3 H(+). Its pathway is cofactor biosynthesis; thiamine diphosphate biosynthesis. Catalyzes the synthesis of the hydroxymethylpyrimidine phosphate (HMP-P) moiety of thiamine from aminoimidazole ribotide (AIR) in a radical S-adenosyl-L-methionine (SAM)-dependent reaction. In Xanthomonas axonopodis pv. citri (strain 306), this protein is Phosphomethylpyrimidine synthase.